Consider the following 185-residue polypeptide: MKLVSIALMLLGSLAVLGADTARLDTSSQFRKKWNKWALSRGKRELQASSSYPTGLVDEKTVPTQTLGLQDKQSTSSTPQASTQSTAHIRVKRYRQSMNQGSRSTGCRFGTCTMQKLAHQIYQFTDKDKDGMAPRNKISPQGYGRRRRRSLPEVLRARTVESSQEQTHSAPASPAHQDISRVSRL.

A signal peptide spans 1–21 (MKLVSIALMLLGSLAVLGADT). R41 bears the Arginine amide mark. A propeptide spanning residues 45 to 91 (ELQASSSYPTGLVDEKTVPTQTLGLQDKQSTSSTPQASTQSTAHIRV) is cleaved from the precursor. The segment at 68–89 (GLQDKQSTSSTPQASTQSTAHI) is disordered. Positions 73–87 (QSTSSTPQASTQSTA) are enriched in low complexity. C107 and C112 are disulfide-bonded. A disordered region spans residues 125 to 185 (TDKDKDGMAP…HQDISRVSRL (61 aa)). At Y143 the chain carries Tyrosine amide. A propeptide spans 150 to 185 (SLPEVLRARTVESSQEQTHSAPASPAHQDISRVSRL) (preproAM C-terminal fragment). Residues 160-170 (VESSQEQTHSA) show a composition bias toward polar residues.

It belongs to the adrenomedullin family. As to expression, expressed in adrenal glands, lung, kidney, heart, spleen, duodenum and submandibular glands.

It localises to the secreted. Functionally, adrenomedullin/ADM and proadrenomedullin N-20 terminal peptide/PAMP are peptide hormones that act as potent hypotensive and vasodilatator agents. Numerous actions have been reported most related to the physiologic control of fluid and electrolyte homeostasis. ADM function is mediated by the CALCRL-RAMP2 and CALCRL-RAMP3 receptor complexes with ADM showing the highest potency for the CALCRL-RAMP2 complex. This Rattus norvegicus (Rat) protein is Pro-adrenomedullin.